The sequence spans 763 residues: DEK domain-containing chromatin-associated protein 3 (763 aa).

Disordered stretches follow at residues 1 to 324 (MGED…RERK) and 458 to 681 (TGDV…SDKV). A compositionally biased stretch (polar residues) spans 11-20 (PTANKTTSLE). Basic and acidic residues-rich tracts occupy residues 32–44 (AGGK…AKDE), 72–97 (SEVK…KDEG), 124–172 (TVMK…KANG), and 180–242 (DIKE…KVED). The stretch at 60–96 (KDDEKAETEDKESEVKKNEDNAETQKMEEKVEVTKDE) forms a coiled coil. Residues 214–286 (GKEKEDKEEN…KEESKGSKKR (73 aa)) are a coiled coil. Positions 243–252 (EKEGSEDEND) are enriched in acidic residues. The segment covering 253–264 (NEKVESKDAKED) has biased composition (basic and acidic residues). The span at 265–277 (EKEETNDDKEDEK) shows a compositional bias: acidic residues. The short motif at 284–291 (KKRGKGTS) is the Nuclear localization signal 1 element. The span at 295 to 311 (KVREKNKTEEVKKDAEP) shows a compositional bias: basic and acidic residues. The span at 475–484 (KGAKRKRTPK) shows a compositional bias: basic residues. The Nuclear localization signal 2 signature appears at 483–490 (PKKTSPTA). Residues 485 to 496 (KTSPTAGSSSSK) show a composition bias toward low complexity. The stretch at 513–551 (KKSLAHSDDESEEEKEEEEKQEEEKAEEKEEKKEEENEN) forms a coiled coil. Residues 521 to 533 (DESEEEKEEEEKQ) show a composition bias toward acidic residues. The span at 534–547 (EEEKAEEKEEKKEE) shows a compositional bias: basic and acidic residues. A compositionally biased stretch (acidic residues) spans 557-578 (SEDEAPQPSESEEKDESEEHSE). Low complexity-rich tracts occupy residues 606 to 615 (AVVAAKSSPP) and 650 to 660 (PIKASPAPSKS). Over residues 661–681 (ASKEKPVKRAGKGKDKPSDKV) the composition is skewed to basic and acidic residues. The DEK-C domain occupies 676–731 (KPSDKVLKNAIVEILKRVDFSTATFTDILKELAKEFTEDLTPRKSSIKMIIQEELT). 2 consecutive DNA-binding regions follow at residues 694-708 (DFST…KELA) and 723-727 (KMIIQ). Residues 723–753 (KMIIQEELTKLADEEEEEEKKEEDSEKEEAG) adopt a coiled-coil conformation. A disordered region spans residues 730 to 763 (LTKLADEEEEEEKKEEDSEKEEAGGSGGGEEVKA). A compositionally biased stretch (gly residues) spans 753–763 (GGSGGGEEVKA).

In terms of assembly, found in a mRNA splicing-dependent exon junction complex (EJC). Binds specifically histones H3 and H4. Interacts with TOP1A, SCC3, At1g61730, At1g20940, At1g13930, DEK4, HDT1, NIT1, SHL, CYP19-1, GEBPL, HSP70-3, PDP2, PDP3, KIN2, RPL11A and PDS5A. In terms of tissue distribution, highly expressed in young seedlings.

It localises to the nucleus. It is found in the nucleolus. Its function is as follows. Chromatin-associated protein which contributes to the modulation of chromatin structure (such as super-helical structure of DNA) and function. Binds to chromatin of protein-coding genes throughout the genome to regulate nucleosome occupancy and chromatin accessibility, and to modulate the expression of target genes. Negative regulator of stress tolerance (e.g. high salt). This chain is DEK domain-containing chromatin-associated protein 3, found in Arabidopsis thaliana (Mouse-ear cress).